A 443-amino-acid chain; its full sequence is tRNA-2-methylthio-N(6)-dimethylallyladenosine synthase (443 aa).

In terms of domain architecture, MTTase N-terminal spans 3–120 (SKLYIRTFGC…LPDLIDARRR (118 aa)). Cysteine 12, cysteine 49, cysteine 83, cysteine 157, cysteine 161, and cysteine 164 together coordinate [4Fe-4S] cluster. A Radical SAM core domain is found at 143 to 375 (RTEGSTAFVS…QEKIQLNAQA (233 aa)). In terms of domain architecture, TRAM spans 378–441 (QGMVDTVQRI…SHTLRGEISD (64 aa)).

It belongs to the methylthiotransferase family. MiaB subfamily. As to quaternary structure, monomer. Requires [4Fe-4S] cluster as cofactor.

Its subcellular location is the cytoplasm. It catalyses the reaction N(6)-dimethylallyladenosine(37) in tRNA + (sulfur carrier)-SH + AH2 + 2 S-adenosyl-L-methionine = 2-methylsulfanyl-N(6)-dimethylallyladenosine(37) in tRNA + (sulfur carrier)-H + 5'-deoxyadenosine + L-methionine + A + S-adenosyl-L-homocysteine + 2 H(+). Its function is as follows. Catalyzes the methylthiolation of N6-(dimethylallyl)adenosine (i(6)A), leading to the formation of 2-methylthio-N6-(dimethylallyl)adenosine (ms(2)i(6)A) at position 37 in tRNAs that read codons beginning with uridine. The polypeptide is tRNA-2-methylthio-N(6)-dimethylallyladenosine synthase (Nitrosomonas europaea (strain ATCC 19718 / CIP 103999 / KCTC 2705 / NBRC 14298)).